We begin with the raw amino-acid sequence, 252 residues long: Ribosomal RNA small subunit methyltransferase A (252 aa).

6 residues coordinate S-adenosyl-L-methionine: Asn-10, Leu-12, Gly-36, Glu-57, Asp-81, and Asn-98.

It belongs to the class I-like SAM-binding methyltransferase superfamily. rRNA adenine N(6)-methyltransferase family. RsmA subfamily.

Its subcellular location is the cytoplasm. The catalysed reaction is adenosine(1518)/adenosine(1519) in 16S rRNA + 4 S-adenosyl-L-methionine = N(6)-dimethyladenosine(1518)/N(6)-dimethyladenosine(1519) in 16S rRNA + 4 S-adenosyl-L-homocysteine + 4 H(+). In terms of biological role, specifically dimethylates two adjacent adenosines (A1518 and A1519) in the loop of a conserved hairpin near the 3'-end of 16S rRNA in the 30S particle. May play a critical role in biogenesis of 30S subunits. In Mycoplasmopsis pulmonis (strain UAB CTIP) (Mycoplasma pulmonis), this protein is Ribosomal RNA small subunit methyltransferase A.